Reading from the N-terminus, the 524-residue chain is Nif-specific regulatory protein (524 aa).

An a domain region spans residues 1–182; the sequence is MIHKSDSDTT…AQTIRLMILP (182 aa). Residues 35–176 form the GAF domain; that stretch reads EASKTLQEVL…TVANLIAQTI (142 aa). Positions 212–481 constitute a Sigma-54 factor interaction domain; the sequence is MVGKSPAMRQ…DGWLDNSLDE (270 aa). ATP-binding positions include 240-247 and 303-312; these read GESGTGKE and ADGGTLFLDE. Positions 482–524 are C-terminal DNA-binding domain; that stretch reads RQRLIAALEKAGWVQAKAARLLGMTPRQVAYRIQIMDITMPRL. Positions 496-515 form a DNA-binding region, H-T-H motif; sequence QAKAARLLGMTPRQVAYRIQ.

Interacts with sigma-54.

Functionally, required for activation of most nif operons, which are directly involved in nitrogen fixation. This Klebsiella pneumoniae protein is Nif-specific regulatory protein (nifA).